Consider the following 222-residue polypeptide: Transmembrane protein 114 (222 aa).

Residues 7-27 (ALAGAAALSGALSFVLLAAAI) traverse the membrane as a helical segment. N-linked (GlcNAc...) asparagine glycans are attached at residues Asn54 and Asn88. Helical transmembrane passes span 105 to 125 (FVIL…TGFL), 133 to 153 (LLLL…LTGI), and 188 to 208 (LALG…FLAA).

It is found in the cell junction. The protein localises to the tight junction. Its subcellular location is the lateral cell membrane. It localises to the apical cell membrane. The sequence is that of Transmembrane protein 114 from Mus musculus (Mouse).